We begin with the raw amino-acid sequence, 247 residues long: Probable transcriptional regulatory protein Spro_2779 (247 aa).

Belongs to the TACO1 family.

Its subcellular location is the cytoplasm. The chain is Probable transcriptional regulatory protein Spro_2779 from Serratia proteamaculans (strain 568).